The chain runs to 67 residues: Conotoxin Lt5.9 (67 aa).

The N-terminal stretch at 1–19 (MLCLPVFIILLLLASPAAP) is a signal peptide. The propeptide occupies 20-46 (KSFETKVQSDLTRTDGNMETEENLGEV).

This sequence belongs to the conotoxin T superfamily. Contains 2 disulfide bonds that can be either 'C1-C3, C2-C4' or 'C1-C4, C2-C3', since these disulfide connectivities have been observed for conotoxins with cysteine framework V (for examples, see AC P0DQQ7 and AC P81755). As to expression, expressed by the venom duct.

The protein resides in the secreted. The polypeptide is Conotoxin Lt5.9 (Conus litteratus (Lettered cone)).